The following is a 496-amino-acid chain: Iroquois-class homeodomain protein irx-4-A (496 aa).

Residues 141–203 (GSSRRKNATR…NARRRLKKEN (63 aa)) constitute a DNA-binding region (homeobox; TALE-type). A disordered region spans residues 203–246 (NKMTWPPRNKCSDEKRPYDEEEEEEEEEEDSQKATIKNEKKTVD). Residues 221–232 (DEEEEEEEEEED) show a composition bias toward acidic residues.

It belongs to the TALE/IRO homeobox family. Expressed in the neural plate in overlapping patterns with other irx members, which all share an anterior border of expression. At stage 20, expressed in a subset of cells in the developing hindbrain with expression appearing above the otic vesicle by stage 26. Expression in retina cells begins at stage 28, continuing at later stages and is limited to a subset of retinal cells of the optic cup. Also expressed in the ventricle of the heart from stage 36 (late tailbud) onwards. Only expressed in the pronephros at tadpole stage.

The protein localises to the nucleus. Its function is as follows. Acts partially redundantly with other irx members in neural patterning. Required for formation of the posterior forebrain, midbrain, hindbrain, and to a lesser extent, spinal cord. Patterns the neuroectoderm in both the anterior/posterior and dorsal/ventral axes. Does not appear to play a role in pronephros kidney development. The chain is Iroquois-class homeodomain protein irx-4-A (irx4-a) from Xenopus laevis (African clawed frog).